Here is a 1048-residue protein sequence, read N- to C-terminus: Pleckstrin homology domain-containing family A member 6 (1048 aa).

The segment covering Met1–Met22 has biased composition (polar residues). Residues Met1–Thr36 form a disordered region. Residues Pro59–Arg158 enclose the PH domain. 2 disordered regions span residues Gln165–Leu318 and Ser448–Arg467. Basic and acidic residues predominate over residues Pro201–Pro233. Ser247 and Ser251 each carry phosphoserine. Residues Ala267 to Gly290 are compositionally biased toward polar residues. Ser314, Ser459, Ser461, and Ser472 each carry phosphoserine. Polar residues predominate over residues Val456 to Tyr465. Tyr492 is modified (phosphotyrosine). Ser591 is subject to Phosphoserine. Residues Arg663–Arg746 form a disordered region. Over residues Ser687–Ser711 the composition is skewed to low complexity. Residues Gly712–Gly721 show a composition bias toward polar residues. Residue Thr744 is modified to Phosphothreonine. A Phosphoserine modification is found at Ser777. Phosphothreonine is present on Thr784. Residues Ala793–Ala858 are disordered. Polar residues predominate over residues Ser794–Gln803. Ser801 bears the Phosphoserine mark. Over residues Gly815 to Arg827 the composition is skewed to basic and acidic residues. Basic residues predominate over residues Met828 to Ser842. Phosphoserine occurs at positions 848, 854, and 867. At Thr920 the chain carries Phosphothreonine. At Ser940 the chain carries Phosphoserine. Disordered regions lie at residues Pro968–Glu989 and Arg1005–Val1048. The residue at position 1015 (Thr1015) is a Phosphothreonine. Pro residues predominate over residues Pro1016–Asn1030. Ser1017 is modified (phosphoserine). Position 1020 is a phosphothreonine (Thr1020). Phosphoserine is present on residues Ser1021 and Ser1024.

Highly expressed in heart, kidney and throughout the brain.

In Homo sapiens (Human), this protein is Pleckstrin homology domain-containing family A member 6 (PLEKHA6).